Consider the following 417-residue polypeptide: Citrate synthase-related protein DDB_G0287281 (417 aa).

The disordered stretch occupies residues 284–317; it reads NKNNNNNNNNNNNNNNNNNNNNNNNNSEDDDDDN. Low complexity predominate over residues 286-309; sequence NNNNNNNNNNNNNNNNNNNNNNNN.

This sequence belongs to the citrate synthase family.

This Dictyostelium discoideum (Social amoeba) protein is Citrate synthase-related protein DDB_G0287281.